Consider the following 662-residue polypeptide: PAN2-PAN3 deadenylation complex subunit PAN3 (662 aa).

Disordered regions lie at residues 1–29 (MASA…NAKD) and 53–133 (DPHK…DTVT). Residues 26-55 (NAKDTLCRNITIYGRCRYEDKGCAFNHDPH) form a C3H1-type zinc finger. Over residues 75–102 (SFTPSLLSSNGSSPTSTPATTKKMTTIS) the composition is skewed to low complexity. Residues 115-133 (SVVSRSNASTPGLRQDTVT) show a composition bias toward polar residues. Residues 263–525 (QTLPNTQLPA…NIDVFITGIS (263 aa)) are pseudokinase domain. Residues R315, 364–371 (DYHPLSKT), and 425–426 (SK) contribute to the ATP site. Residues 526–564 (SQLMSTFDSALHLDDQLTSDLSRELENGRLVRLMAKLNF) are a coiled coil. A knob domain region spans residues 565–662 (VNERPEYEHD…ALMKPARRMH (98 aa)).

It belongs to the protein kinase superfamily. PAN3 family. As to quaternary structure, homodimer. Forms a heterotrimer with a catalytic subunit pan2 to form the poly(A)-nuclease (PAN) deadenylation complex. Interacts (via PAM-2 motif) with poly(A)-binding protein pab1 (via PABC domain), conferring substrate specificity of the enzyme complex.

It is found in the cytoplasm. Regulatory subunit of the poly(A)-nuclease (PAN) deadenylation complex, one of two cytoplasmic mRNA deadenylases involved in mRNA turnover. PAN specifically shortens poly(A) tails of RNA and the activity is stimulated by poly(A)-binding protein pab1. PAN deadenylation is followed by rapid degradation of the shortened mRNA tails by the CCR4-NOT complex. Deadenylated mRNAs are then degraded by two alternative mechanisms, namely exosome-mediated 3'-5' exonucleolytic degradation, or deadenylation-dependent mRNA decaping and subsequent 5'-3' exonucleolytic degradation by xrn1. May also be involved in post-transcriptional maturation of mRNA poly(A) tails. pan3 acts as a positive regulator for PAN activity, recruiting the catalytic subunit pan2 to mRNA via its interaction with RNA and with pab1. This Aspergillus fumigatus (strain ATCC MYA-4609 / CBS 101355 / FGSC A1100 / Af293) (Neosartorya fumigata) protein is PAN2-PAN3 deadenylation complex subunit PAN3.